The sequence spans 149 residues: Transcriptional repressor NrdR (149 aa).

A zinc finger spans residues 3-34 (CPFCFAVDTKVIDSRLVGEGSSVRRRRQCLVC). Positions 49–139 (PRVIKSNDVR…VYRSFEDIKD (91 aa)) constitute an ATP-cone domain.

The protein belongs to the NrdR family. Zn(2+) serves as cofactor.

Its function is as follows. Negatively regulates transcription of bacterial ribonucleotide reductase nrd genes and operons by binding to NrdR-boxes. The protein is Transcriptional repressor NrdR of Salmonella schwarzengrund (strain CVM19633).